We begin with the raw amino-acid sequence, 337 residues long: MNTEATHDQNEALTTGARLRNAREQLGLSQQAVAERLCLKVSTVRDIEEDKAPADLASTFLRGYIRSYARLVHIPEEELLPGLEKQAPLRAAKVAPMQSFSLGKRRKKRDGWLMTFTWLVLFVVIGLSGAWWWQDHKAQQEEITTMADQSSAELSSNSEQGQSVPLNTSTTTDPATTSTPPASVDTTATNTQTPAVTAPAPAVDPQQNAVVSPSQANVDTAATPVPTAATTPDGAAPLPTDQAGVTTPVADPNALVMNFTADCWLEVTDATGKKLFSGMQRKDGNLNLTGQAPYKLKIGAPAAVQIQYQGKPVDLSRFIRTNQVARLTLNAEQSPAQ.

The Cytoplasmic portion of the chain corresponds to 1–111 (MNTEATHDQN…LGKRRKKRDG (111 aa)). Residues 19-71 (LRNAREQLGLSQQAVAERLCLKVSTVRDIEEDKAPADLASTFLRGYIRSYARL) form the HTH cro/C1-type domain. Residues 30-49 (QQAVAERLCLKVSTVRDIEE) constitute a DNA-binding region (H-T-H motif). The chain crosses the membrane as a helical; Signal-anchor for type II membrane protein span at residues 112–132 (WLMTFTWLVLFVVIGLSGAWW). Over 133–337 (WQDHKAQQEE…TLNAEQSPAQ (205 aa)) the chain is Periplasmic. Positions 145–167 (TMADQSSAELSSNSEQGQSVPLN) are enriched in polar residues. Residues 145-218 (TMADQSSAEL…AVVSPSQANV (74 aa)) are disordered. The span at 168–207 (TSTTTDPATTSTPPASVDTTATNTQTPAVTAPAPAVDPQQ) shows a compositional bias: low complexity. A compositionally biased stretch (polar residues) spans 208–218 (NAVVSPSQANV).

The protein belongs to the RodZ family.

Its subcellular location is the cell inner membrane. In terms of biological role, cytoskeletal protein that is involved in cell-shape control through regulation of the length of the long axis. This is Cytoskeleton protein RodZ from Shigella dysenteriae serotype 1 (strain Sd197).